A 1830-amino-acid polypeptide reads, in one-letter code: Guanine nucleotide exchange factor SPIKE 1 (1830 aa).

N-acetylmethionine is present on Met-1. The disordered stretch occupies residues 285 to 304 (NTGESASPSSPLAPSMTASS). Residues 289–304 (SASPSSPLAPSMTASS) are compositionally biased toward low complexity. Residues 463–622 (FHCLYVYPVA…NIFKLRLRLC (160 aa)) form the C2 DOCK-type domain. The residue at position 1051 (Ser-1051) is a Phosphoserine. A Phosphothreonine modification is found at Thr-1079. Ser-1095 carries the post-translational modification Phosphoserine. A DOCKER domain is found at 1379–1828 (MAFAPVPDLH…LSHYIPAILS (450 aa)).

Belongs to the DOCK family. Homodimer. Component of SCAR/WAVE and ARP2/3 complexes. Interacts directly with ARAC4/ROP2, ARAC1/ROP3, ARAC5/ROP4, ARAC6/ROP5, ARAC8/ROP10, ARAC9/ROP8, SCAR1, SCAR2, SCAR3, SCAR4, ABI1, ABI2, ABI3 and ABI4. Binds to the inactive GDP-bound form of ARAC3/ROP6. As to expression, expressed ubiquitously, in roots and aerial organs.

The protein localises to the cytoplasm. Its subcellular location is the endoplasmic reticulum membrane. It localises to the nucleus. In terms of biological role, guanine nucleotide exchange factor (GEF) for Rho and Rac. GEF proteins activate small GTPases by exchanging bound GDP for free GTP. Controls actin polymerization via the two heteromeric complexes WAVE and actin-related protein (ARP) 2/3. Involved in cytoskeletal reorganization required for cell shape (e.g. trichome and cotyledon) control and tissue development. Prevents cortical microtubules organization into parallel arrays oriented perpendicular to the axis of cell elongation to limit anisotropic cell growth during petal development, probably by triggering ARAC4/ROP2 and ARAC3/ROP6 activity. Promotes polarized growth and cell-cell adhesion in the leaf epidermis probably by promoting the formation of endoplasmic reticulum (ER) exit site (ERES) and/or trafficking between the ER and Golgi. Triggers ARAC3/ROP6 activation required for auxin-mediated inhibition of PIN2 internalization during gravitropic responses (, PubMed:22683260). This Arabidopsis thaliana (Mouse-ear cress) protein is Guanine nucleotide exchange factor SPIKE 1.